The primary structure comprises 334 residues: Adenosine deaminase (334 aa).

The Zn(2+) site is built by His12 and His14. Positions 14, 16, and 170 each coordinate substrate. His197 contributes to the Zn(2+) binding site. Glu200 serves as the catalytic Proton donor. Residue Asp278 participates in Zn(2+) binding. Asp279 contributes to the substrate binding site.

The protein belongs to the metallo-dependent hydrolases superfamily. Adenosine and AMP deaminases family. Adenosine deaminase subfamily. The cofactor is Zn(2+).

The catalysed reaction is adenosine + H2O + H(+) = inosine + NH4(+). The enzyme catalyses 2'-deoxyadenosine + H2O + H(+) = 2'-deoxyinosine + NH4(+). In terms of biological role, catalyzes the hydrolytic deamination of adenosine and 2-deoxyadenosine. The protein is Adenosine deaminase of Yersinia pseudotuberculosis serotype IB (strain PB1/+).